The chain runs to 275 residues: Elongation factor Ts (275 aa).

The tract at residues 80-83 (TDFV) is involved in Mg(2+) ion dislocation from EF-Tu.

The protein belongs to the EF-Ts family.

The protein localises to the cytoplasm. Its function is as follows. Associates with the EF-Tu.GDP complex and induces the exchange of GDP to GTP. It remains bound to the aminoacyl-tRNA.EF-Tu.GTP complex up to the GTP hydrolysis stage on the ribosome. This is Elongation factor Ts from Kineococcus radiotolerans (strain ATCC BAA-149 / DSM 14245 / SRS30216).